Reading from the N-terminus, the 427-residue chain is UBX domain-containing protein 2 (427 aa).

Disordered regions lie at residues 115–143 (FDQS…SRAS) and 273–331 (ETSG…GVAD). Low complexity predominate over residues 311–326 (STTESQGESSSQQAES). One can recognise a UBX domain in the interval 349–425 (PGPNVTRIQI…GIQNTALQFE (77 aa)). S371 is modified (phosphoserine).

As to quaternary structure, interacts with cdc48.

In terms of biological role, involved in CDC48-dependent protein degradation through the ubiquitin/proteasome pathway. This Schizosaccharomyces pombe (strain 972 / ATCC 24843) (Fission yeast) protein is UBX domain-containing protein 2 (ubx2).